A 79-amino-acid chain; its full sequence is Small ribosomal subunit protein uS11 (79 aa).

Ser14 carries the post-translational modification Phosphoserine. Residues Lys59 and Lys61 each participate in a glycyl lysine isopeptide (Lys-Gly) (interchain with G-Cter in SUMO2) cross-link.

Belongs to the universal ribosomal protein uS11 family. Component of the small ribosomal subunit. Part of the small subunit (SSU) processome, composed of more than 70 proteins and the RNA chaperone small nucleolar RNA (snoRNA) U3.

The protein resides in the cytoplasm. The protein localises to the nucleus. It localises to the nucleolus. Its function is as follows. Component of the small ribosomal subunit. The ribosome is a large ribonucleoprotein complex responsible for the synthesis of proteins in the cell. Part of the small subunit (SSU) processome, first precursor of the small eukaryotic ribosomal subunit. During the assembly of the SSU processome in the nucleolus, many ribosome biogenesis factors, an RNA chaperone and ribosomal proteins associate with the nascent pre-rRNA and work in concert to generate RNA folding, modifications, rearrangements and cleavage as well as targeted degradation of pre-ribosomal RNA by the RNA exosome. In Sus scrofa (Pig), this protein is Small ribosomal subunit protein uS11 (RPS14).